We begin with the raw amino-acid sequence, 204 residues long: NADH-quinone oxidoreductase subunit C (204 aa).

The protein belongs to the complex I 30 kDa subunit family. NDH-1 is composed of 14 different subunits. Subunits NuoB, C, D, E, F, and G constitute the peripheral sector of the complex.

It localises to the cell inner membrane. It carries out the reaction a quinone + NADH + 5 H(+)(in) = a quinol + NAD(+) + 4 H(+)(out). Its function is as follows. NDH-1 shuttles electrons from NADH, via FMN and iron-sulfur (Fe-S) centers, to quinones in the respiratory chain. The immediate electron acceptor for the enzyme in this species is believed to be ubiquinone. Couples the redox reaction to proton translocation (for every two electrons transferred, four hydrogen ions are translocated across the cytoplasmic membrane), and thus conserves the redox energy in a proton gradient. The sequence is that of NADH-quinone oxidoreductase subunit C from Rhodopseudomonas palustris (strain ATCC BAA-98 / CGA009).